The following is a 564-amino-acid chain: Probable beta-glucosidase btgE (564 aa).

Residues 1–18 form the signal peptide; sequence MRGAFLATAAAIAGTAMA. The disordered stretch occupies residues 285–304; that stretch reads ATSSVAPSSSPSKPAAPSGA. N-linked (GlcNAc...) asparagine glycosylation occurs at N404. The Proton donor role is filled by E405. Residue E501 is the Nucleophile of the active site.

It belongs to the glycosyl hydrolase 17 family.

It localises to the secreted. It is found in the cell wall. The enzyme catalyses Hydrolysis of terminal, non-reducing beta-D-glucosyl residues with release of beta-D-glucose.. It participates in glycan metabolism; cellulose degradation. Its function is as follows. Beta-glucosidases are one of a number of cellulolytic enzymes involved in the degradation of cellulosic biomass. Catalyzes the last step releasing glucose from the inhibitory cellobiose. The sequence is that of Probable beta-glucosidase btgE (btgE) from Aspergillus clavatus (strain ATCC 1007 / CBS 513.65 / DSM 816 / NCTC 3887 / NRRL 1 / QM 1276 / 107).